The primary structure comprises 320 residues: 7-acetyl-epi-neemfruitin B aldo-keto reductase (320 aa).

Aspartate 51 contacts NADP(+). The active-site Proton donor is tyrosine 56. NADP(+) is bound by residues glutamine 186 and 264 to 272 (FNKQRMEEN).

Belongs to the aldo/keto reductase family. In terms of tissue distribution, mainly expressed in petioles and, to a lower extent, in roots.

It carries out the reaction 7-acetyl-epi-neemfruitin B + AH2 + H2O = (1S,3bR,4R,5aR,9aR,9bR,11aS)-1-[(4R)-5-[(2S)-3,3-dimethyloxiran-2-yl]-1,4-dihydroxybutan-2-yl]-3b,6,6,9a,11a-pentamethyl-7-oxo-1H,2H,3bH,4H,5H,5aH,6H,7H,9aH,9bH,10H,11H,11aH-cyclopenta[a]phenanthren-4-yl acetate + acetate + A + H(+). It functions in the pathway secondary metabolite biosynthesis; terpenoid biosynthesis. Functionally, aldo-keto reductase involved in the biosynthesis of limonoids triterpene natural products such as azadirachtin, an antifeedant widely used as bioinsecticide, and possessing many medicinal applications including anti-tumoral, anti-malarial, anti-rheumatic, antibacterial, anti-inflammatory, anti-pyretic and diuretic effects. Can use 7-acetyl-epi-neemfruitin B as substrate. This Melia azedarach (Chinaberry tree) protein is 7-acetyl-epi-neemfruitin B aldo-keto reductase.